The sequence spans 437 residues: Trigger factor (437 aa).

The region spanning 163–248 is the PPIase FKBP-type domain; that stretch reads SDRVIIDFEG…LNNVSEATLP (86 aa).

This sequence belongs to the FKBP-type PPIase family. Tig subfamily.

Its subcellular location is the cytoplasm. It catalyses the reaction [protein]-peptidylproline (omega=180) = [protein]-peptidylproline (omega=0). Involved in protein export. Acts as a chaperone by maintaining the newly synthesized protein in an open conformation. Functions as a peptidyl-prolyl cis-trans isomerase. This Neisseria meningitidis serogroup C / serotype 2a (strain ATCC 700532 / DSM 15464 / FAM18) protein is Trigger factor.